We begin with the raw amino-acid sequence, 93 residues long: Aspartyl/glutamyl-tRNA(Asn/Gln) amidotransferase subunit C (93 aa).

It belongs to the GatC family. In terms of assembly, heterotrimer of A, B and C subunits.

The catalysed reaction is L-glutamyl-tRNA(Gln) + L-glutamine + ATP + H2O = L-glutaminyl-tRNA(Gln) + L-glutamate + ADP + phosphate + H(+). The enzyme catalyses L-aspartyl-tRNA(Asn) + L-glutamine + ATP + H2O = L-asparaginyl-tRNA(Asn) + L-glutamate + ADP + phosphate + 2 H(+). In terms of biological role, allows the formation of correctly charged Asn-tRNA(Asn) or Gln-tRNA(Gln) through the transamidation of misacylated Asp-tRNA(Asn) or Glu-tRNA(Gln) in organisms which lack either or both of asparaginyl-tRNA or glutaminyl-tRNA synthetases. The reaction takes place in the presence of glutamine and ATP through an activated phospho-Asp-tRNA(Asn) or phospho-Glu-tRNA(Gln). In Rubrobacter xylanophilus (strain DSM 9941 / JCM 11954 / NBRC 16129 / PRD-1), this protein is Aspartyl/glutamyl-tRNA(Asn/Gln) amidotransferase subunit C.